The chain runs to 156 residues: Protein CROC-4 (156 aa).

The disordered stretch occupies residues 46–71 (RATSSTTDSSRAPSSPRPPGSTSHCG). Residues 48–59 (TSSTTDSSRAPS) show a composition bias toward low complexity.

Expressed throughout the brain in the thalamus, subthalamic nucleus, corpus callosum, hippocampus, substantia nigra, caudate nucleus, and amygdala.

It localises to the nucleus. Functionally, may play a role in FOS signaling pathways involved in development and remodeling of neurons. Promotes transcription of the FOS promoter. The sequence is that of Protein CROC-4 from Homo sapiens (Human).